Reading from the N-terminus, the 344-residue chain is uncharacterized protein (344 aa).

The protein belongs to the glycosyltransferase 2 family.

In terms of biological role, may be involved in the production of the exopolysaccharide (EPS) component of the extracellular matrix during biofilm formation. EPS is responsible for the adhesion of chains of cells into bundles. This is an uncharacterized protein from Bacillus subtilis (strain 168).